A 373-amino-acid polypeptide reads, in one-letter code: Probable ethanolamine permease EutH (373 aa).

The next 10 helical transmembrane spans lie at 5–25 (EIII…KIIG), 38–58 (IMAM…APVL), 61–81 (ILSP…AMFA), 111–131 (ILGS…LGII), 143–163 (VLSG…VAGF), 166–186 (IMIF…MLGL), 197–217 (FTIF…AGAI), 236–256 (IEIV…VFVI), 307–327 (VAFA…TAGV), and 331–351 (MIFP…AVGI).

It belongs to the EutH family.

Its subcellular location is the cell membrane. The catalysed reaction is ethanolamine(in) = ethanolamine(out). Its function is as follows. Probably involved in the diffusion of protonated ethanolamine (EA) into the cell at low pH. At low pH most EA is protonated, and this permease becomes necessary. Contributes to bacterial survival and replication in acidic macrophage vacuoles, but not to bacterial uptake by macrophages. The chain is Probable ethanolamine permease EutH from Listeria monocytogenes serotype 1/2a (strain 10403S).